The sequence spans 483 residues: Cysteine--tRNA ligase (483 aa).

C28 contacts Zn(2+). The short motif at 30 to 40 (MTVYDYCHLGH) is the 'HIGH' region element. Positions 212, 237, and 241 each coordinate Zn(2+). The 'KMSKS' region motif lies at 269–273 (KMSKS). Residue K272 participates in ATP binding.

The protein belongs to the class-I aminoacyl-tRNA synthetase family. In terms of assembly, monomer. Zn(2+) is required as a cofactor.

Its subcellular location is the cytoplasm. It catalyses the reaction tRNA(Cys) + L-cysteine + ATP = L-cysteinyl-tRNA(Cys) + AMP + diphosphate. This Bordetella avium (strain 197N) protein is Cysteine--tRNA ligase.